Reading from the N-terminus, the 59-residue chain is MKFSSIILLTLLICSMSIFGNCQIETNKKCQGGSCASVCRRVIGVAAGKCINGRCVCYP.

Positions 1 to 22 (MKFSSIILLTLLICSMSIFGNC) are cleaved as a signal peptide. Gln-23 carries the post-translational modification Pyrrolidone carboxylic acid. Disulfide bonds link Cys-30–Cys-50, Cys-35–Cys-55, and Cys-39–Cys-57.

As to expression, expressed by the venom gland.

It is found in the secreted. Functionally, blocker of A-type voltage-gated potassium channels of cerebellar granular cells. May also inhibit Kv4/KCND when coexpressed with DPP6 or DPP10. The occlusion of the outer entry of the K(+) conducting pore is partially reversible and affects both open and closed channels. It shares the same target in rat brain than BmTX3 (AC Q8I0L5) and AmmTX3 (AC P60208). This chain is Potassium channel toxin alpha-KTx 15.4, found in Androctonus australis (Sahara scorpion).